The following is a 141-amino-acid chain: Large ribosomal subunit protein uL11 (141 aa).

Residues 1–23 (MAKQVTGQAKFQVPGGQATPAPP) form a disordered region.

It belongs to the universal ribosomal protein uL11 family. Part of the ribosomal stalk of the 50S ribosomal subunit. Interacts with L10 and the large rRNA to form the base of the stalk. L10 forms an elongated spine to which L12 dimers bind in a sequential fashion forming a multimeric L10(L12)X complex. In terms of processing, one or more lysine residues are methylated.

In terms of biological role, forms part of the ribosomal stalk which helps the ribosome interact with GTP-bound translation factors. The protein is Large ribosomal subunit protein uL11 of Rhodopirellula baltica (strain DSM 10527 / NCIMB 13988 / SH1).